Consider the following 1097-residue polypeptide: RecBCD enzyme subunit RecC (1097 aa).

Belongs to the RecC family. As to quaternary structure, heterotrimer of RecB, RecC and RecD. All subunits contribute to DNA-binding.

Functionally, a helicase/nuclease that prepares dsDNA breaks (DSB) for recombinational DNA repair. Binds to DSBs and unwinds DNA via a highly rapid and processive ATP-dependent bidirectional helicase activity. Holoenzyme degrades any linearized DNA that is unable to undergo homologous recombination. In the holoenzyme this subunit recognizes the wild-type Chi sequence, and when added to isolated RecB increases its ATP-dependent helicase processivity. Unlike the case in E.coli, suppresses RecA-dependent homologous recombination, is instead required for single-strand annealing pathway repair of DSB. This Mycobacterium tuberculosis (strain CDC 1551 / Oshkosh) protein is RecBCD enzyme subunit RecC.